We begin with the raw amino-acid sequence, 747 residues long: ATPase family gene 2 protein homolog B (747 aa).

The residue at position 1 (Met-1) is an N-acetylmethionine. Residues 234 to 241 (GPPGVGKT) and 500 to 507 (GPPGCAKT) each bind ATP.

It belongs to the AAA ATPase family. AFG2 subfamily. As to quaternary structure, part of the 55LCC heterohexameric ATPase complex composed at least of AIRIM, AFG2A, AFG2B and CINP. Associates with pre-60S ribosomal particles. As to expression, in adult ear, expressed at low levels in neurosensory hair cells (inner and outer) and supporting cells (pillar and Deiter cells).

It is found in the cytoplasm. The protein resides in the cytoskeleton. It localises to the spindle. Its subcellular location is the nucleus. The enzyme catalyses ATP + H2O = ADP + phosphate + H(+). Its activity is regulated as follows. In the context of 55LCC heterohexameric ATPase complex, the ATPase activity is stimulated by DNA binding and inhibited in presence of RNA. Functionally, ATP-dependent chaperone part of the 55LCC heterohexameric ATPase complex which is chromatin-associated and promotes replisome proteostasis to maintain replication fork progression and genome stability. Required for replication fork progression, sister chromatid cohesion, and chromosome stability. The ATPase activity is specifically enhanced by replication fork DNA and is coupled to cysteine protease-dependent cleavage of replisome substrates in response to replication fork damage. Uses ATPase activity to process replisome substrates in S-phase, facilitating their proteolytic turnover from chromatin to ensure DNA replication and mitotic fidelity. Plays an essential role in the cytoplasmic maturation steps of pre-60S ribosomal particles by promoting the release of shuttling protein RSL24D1/RLP24 from the pre-ribosomal particles. The chain is ATPase family gene 2 protein homolog B (Afg2b) from Mus musculus (Mouse).